Reading from the N-terminus, the 122-residue chain is MIQIQSYLNIADNSGARKIMCIQVLGSNNPHYANIGDIIIGVVKDALPNMPIKKSDIIRAVIVRTKKTIRRNDGMSIRFDDNAAVIINQENNPRGTRVFGPIAKELRDKNFSKIISLAAEVV.

The protein belongs to the universal ribosomal protein uL14 family. Part of the 50S ribosomal subunit.

The protein resides in the plastid. It is found in the chloroplast. In terms of biological role, binds to 23S rRNA. The sequence is that of Large ribosomal subunit protein uL14c from Gracilaria tenuistipitata var. liui (Red alga).